The sequence spans 406 residues: Tryptophan synthase beta chain (406 aa).

Lys-99 is subject to N6-(pyridoxal phosphate)lysine.

This sequence belongs to the TrpB family. Tetramer of two alpha and two beta chains. Pyridoxal 5'-phosphate serves as cofactor.

The catalysed reaction is (1S,2R)-1-C-(indol-3-yl)glycerol 3-phosphate + L-serine = D-glyceraldehyde 3-phosphate + L-tryptophan + H2O. It participates in amino-acid biosynthesis; L-tryptophan biosynthesis; L-tryptophan from chorismate: step 5/5. Functionally, the beta subunit is responsible for the synthesis of L-tryptophan from indole and L-serine. The chain is Tryptophan synthase beta chain from Rhizobium etli (strain CIAT 652).